A 557-amino-acid polypeptide reads, in one-letter code: Intraflagellar transport protein 56 (557 aa).

The disordered stretch occupies residues Met1 to Ile30. Positions Lys21 to Ile30 are enriched in basic residues. 4 TPR repeats span residues Glu60–Pro93, Asp95–Arg128, Thr154–Phe187, and Ala471–Arg504.

It belongs to the IFT56 family. In terms of assembly, component of the IFT complex B.

It localises to the cell projection. The protein resides in the cilium. In terms of biological role, component of the intraflagellar transport (IFT) complex B required for transport of proteins in the motile cilium. Required for transport of specific ciliary cargo proteins related to motility, while it is neither required for IFT complex B assembly or motion nor for cilium assembly. Plays a key role in maintaining the integrity of the IFT complex B and the proper ciliary localization of the IFT complex B components. Essential for maintaining proper microtubule organization within the ciliary axoneme. This chain is Intraflagellar transport protein 56, found in Danio rerio (Zebrafish).